We begin with the raw amino-acid sequence, 158 residues long: Snaclec mucrocetin subunit alpha (158 aa).

The first 23 residues, 1–23 (MGRFIFVSFGLLVVFLSLSGTGA), serve as a signal peptide directing secretion. Disulfide bonds link cysteine 27-cysteine 38, cysteine 55-cysteine 152, and cysteine 127-cysteine 144. The C-type lectin domain occupies 34-153 (YDRYCYQAFS…CGRENPFVCK (120 aa)).

Belongs to the snaclec family. As to quaternary structure, tetramer of heterodimers of alpha and beta subunits (alphabeta)(4); disulfide-linked. In terms of tissue distribution, expressed by the venom gland.

Its subcellular location is the secreted. Platelet-agglutinating factor that acts in a vWF-independent manner. Binds specifically to platelet GPIbalpha (GP1BA) to a distinct binding site from that of flavocetin-A. The polypeptide is Snaclec mucrocetin subunit alpha (Protobothrops mucrosquamatus (Taiwan habu)).